The following is a 714-amino-acid chain: Cell wall protein IFF7 (714 aa).

The N-terminal stretch at M1–A19 is a signal peptide. Residue N200 is glycosylated (N-linked (GlcNAc...) asparagine). Positions G320–S330 are enriched in polar residues. 2 disordered regions span residues G320 to S633 and P660 to S692. Residues G346–S504 are compositionally biased toward low complexity. N-linked (GlcNAc...) asparagine glycans are attached at residues N390, N394, N399, N421, and N473. The segment covering Q505–A519 has biased composition (polar residues). Residues S520 to G544 show a composition bias toward low complexity. The segment covering V545–Q558 has biased composition (polar residues). Composition is skewed to low complexity over residues S559 to G590 and N597 to N625. N-linked (GlcNAc...) asparagine glycans are attached at residues N577, N621, N624, and N663. The segment covering S665–S679 has biased composition (low complexity). N690 carries an N-linked (GlcNAc...) asparagine glycan. The GPI-anchor amidated asparagine moiety is linked to residue N690. Positions G691 to M714 are cleaved as a propeptide — removed in mature form.

This sequence belongs to the HYR1/IFF family. The GPI-anchor is attached to the protein in the endoplasmic reticulum and serves to target the protein to the cell surface. There, the glucosamine-inositol phospholipid moiety is cleaved off and the GPI-modified mannoprotein is covalently attached via its lipidless GPI glycan remnant to the 1,6-beta-glucan of the outer cell wall layer.

Its subcellular location is the secreted. The protein localises to the cell wall. The protein resides in the membrane. In terms of biological role, GPI-anchored cell wall protein involved in cell wall organization, hyphal growth, as well as in host-fungal interaction and virulence. The protein is Cell wall protein IFF7 (IFF8) of Candida albicans (strain SC5314 / ATCC MYA-2876) (Yeast).